The sequence spans 188 residues: ATP synthase subunit b (188 aa).

Residues 19–39 (LPAVYDIVWSAVVFVVLLVVI) traverse the membrane as a helical segment.

Belongs to the ATPase B chain family. As to quaternary structure, F-type ATPases have 2 components, F(1) - the catalytic core - and F(0) - the membrane proton channel. F(1) has five subunits: alpha(3), beta(3), gamma(1), delta(1), epsilon(1). F(0) has three main subunits: a(1), b(2) and c(10-14). The alpha and beta chains form an alternating ring which encloses part of the gamma chain. F(1) is attached to F(0) by a central stalk formed by the gamma and epsilon chains, while a peripheral stalk is formed by the delta and b chains.

The protein resides in the cell membrane. F(1)F(0) ATP synthase produces ATP from ADP in the presence of a proton or sodium gradient. F-type ATPases consist of two structural domains, F(1) containing the extramembraneous catalytic core and F(0) containing the membrane proton channel, linked together by a central stalk and a peripheral stalk. During catalysis, ATP synthesis in the catalytic domain of F(1) is coupled via a rotary mechanism of the central stalk subunits to proton translocation. Its function is as follows. Component of the F(0) channel, it forms part of the peripheral stalk, linking F(1) to F(0). This chain is ATP synthase subunit b, found in Clavibacter michiganensis subsp. michiganensis (strain NCPPB 382).